Consider the following 295-residue polypeptide: CRISPR system Cmr endoribonuclease Cmr4 (295 aa).

This sequence belongs to the CRISPR system Cmr4 family. As to quaternary structure, forms oligomers in isolation. Part of the type III-B Cmr ribonucleoprotein (RNP) complex, an elongated RNP with Cmr2 and Cmr3 as the base, with Cmr4 and Cmr5 forming a helical core along the mature crRNA (39 or 45 nt in length), while the complex is capped by Cmr6 and Cmr1. The 5' end of the crRNA is bound to Cmr2 and Cmr3, while Cmr6 and a Cmr1 subunit (Cmr1-1 or Cmr1-2) cap the 3' end of the crRNA. The target RNA lies anti-parallel to the crRNA, with its 5' end near Cmr1 and Cmr6 and its 3' end near Cmr2 and Cmr3; major target RNA cleavage occurs nears the junction of Cmr1/Cmr6 and Cmr4/Cmr5, with minor cleavage occurring at 6 nt intervals which coincide with the proposed spacing of Cmr4 subunits. Interacts with Cmr5. Interacts with Cmr2, Cmr3, Cmr5 and Cmr6.

It is found in the cytoplasm. In terms of biological role, CRISPR (clustered regularly interspaced short palindromic repeat), is an adaptive immune system that provides protection against mobile genetic elements (viruses, transposable elements and conjugative plasmids). CRISPR clusters contain sequences complementary to antecedent mobile elements and target invading nucleic acids. CRISPR clusters are transcribed and processed into CRISPR RNA (crRNA), formerly called psiRNA (prokaryotic silencing) in this organism. Part of the Cmr ribonucleoprotein complex which has divalent cation-dependent endoribonuclease activity specific for ssRNA complementary to the crRNA (target RNA), generating 5' hydroxy- and 3' phosphate or 2'-3' cyclic phosphate termini. This is probably the subunit that cleaves the target RNA. Cmr complex does not cleave ssDNA complementary to the crRNA. Cleavage of target RNA is guided by the crRNA; substrate cleavage occurs a fixed distance (14 nt) from the 3' end of the crRNA. In vitro reconstitution shows Cmr1-2 and Cmr5 are not absolutely necessary for target cleavage. The protein is CRISPR system Cmr endoribonuclease Cmr4 of Pyrococcus furiosus (strain ATCC 43587 / DSM 3638 / JCM 8422 / Vc1).